The sequence spans 353 residues: uncharacterized protein (353 aa).

The Mn(2+) site is built by aspartate 212, aspartate 223, histidine 287, glutamate 316, and glutamate 330.

The protein belongs to the peptidase M24B family. Requires Mn(2+) as cofactor.

This is an uncharacterized protein from Bacillus subtilis (strain 168).